The chain runs to 530 residues: MSSLRPEEARKLATAASVSPLSNCQFCGVVISSIADEQKLEFTNKYKGSCTLLCSYDSQGVVLRVVSDDDRSHVLKEYMITADTDAAQMGRRSYAVSLDADNLVLRFGSEQDQQLFRKVVENVKHLRPKSVFSQRTEESSASQYFQFYGYLSQQQNMMQDYVRTSTYQRAILGNAVDFQDKIVLDVGAGSGILSFFAVQAGAAKVYAIEASNMAQYAQQLVESNNVQHKISVIPGKIEEIELPEKVDVIISEPMGYMLYNERMLETYLHARKWLKPQGKMYPTHGDLHIAPFSDESLYSEQYNKANFWYQSAFHGVDLTTLHKEGMKEYFRQPIVDTFDIRICMAKSVRHVCDFLNDKEDDLHLISIPLEFHILQTGICHGLAFWFDVEFSGSSQNVWLSTSPTAPLTHWYQVRCLLPMPIFIKQGQTLTGRVLLEANRRQSYDVTIDLHIEGTLISSSNTLDLKNPYFRYTGAPVQAPPGTSTQSPSEQYWTQVDTQGSRNSSSMLNGGLSVNGIGDGMDITHGLMHPH.

Residues 141 to 450 (ASQYFQFYGY…QSYDVTIDLH (310 aa)) form the SAM-dependent MTase PRMT-type domain. Residues Q154, R163, G187, E209, E238, and T266 each contribute to the S-adenosyl-L-methionine site. R501 carries the post-translational modification Asymmetric dimethylarginine; by autocatalysis.

The protein belongs to the class I-like SAM-binding methyltransferase superfamily. Protein arginine N-methyltransferase family. In terms of assembly, homodimer. The dimethylated protein is the major form.

Its subcellular location is the cytoplasm. It is found in the nucleus. It catalyses the reaction L-arginyl-[protein] + 2 S-adenosyl-L-methionine = N(omega),N(omega)-dimethyl-L-arginyl-[protein] + 2 S-adenosyl-L-homocysteine + 2 H(+). Functionally, methylates (mono- and asymmetric dimethylation) the guanidino nitrogens of arginyl residues in proteins. May methylate histone H3 at 'Arg-17' and activate transcription via chromatin remodeling. This is Histone-arginine methyltransferase CARMER (Art4) from Drosophila sechellia (Fruit fly).